The sequence spans 912 residues: Bifunctional uridylyltransferase/uridylyl-removing enzyme (912 aa).

Residues 1–369 form a uridylyltransferase region; sequence MLPRIANQRA…FFASLRSRRK (369 aa). Residues 370 to 722 form a uridylyl-removing region; it reads KVGPFFIEGG…AHWYPARGAT (353 aa). The 123-residue stretch at 486–608 folds into the HD domain; sequence VDEHTIRAIG…VQSQERLRLL (123 aa). ACT domains are found at residues 723 to 802 and 834 to 912; these read LVTV…LVPQ and VIEV…KDAA.

The protein belongs to the GlnD family. Mg(2+) serves as cofactor.

The enzyme catalyses [protein-PII]-L-tyrosine + UTP = [protein-PII]-uridylyl-L-tyrosine + diphosphate. The catalysed reaction is [protein-PII]-uridylyl-L-tyrosine + H2O = [protein-PII]-L-tyrosine + UMP + H(+). With respect to regulation, uridylyltransferase (UTase) activity is inhibited by glutamine, while glutamine activates uridylyl-removing (UR) activity. In terms of biological role, modifies, by uridylylation and deuridylylation, the PII regulatory proteins (GlnB and homologs), in response to the nitrogen status of the cell that GlnD senses through the glutamine level. Under low glutamine levels, catalyzes the conversion of the PII proteins and UTP to PII-UMP and PPi, while under higher glutamine levels, GlnD hydrolyzes PII-UMP to PII and UMP (deuridylylation). Thus, controls uridylylation state and activity of the PII proteins, and plays an important role in the regulation of nitrogen assimilation and metabolism. In Novosphingobium aromaticivorans (strain ATCC 700278 / DSM 12444 / CCUG 56034 / CIP 105152 / NBRC 16084 / F199), this protein is Bifunctional uridylyltransferase/uridylyl-removing enzyme.